We begin with the raw amino-acid sequence, 116 residues long: Spexin (116 aa).

An N-terminal signal peptide occupies residues 1–26 (MKGFKSLVVMTLTLFLVFSFMGNCNS). Positions 27-35 (APQRLFERR) are excised as a propeptide. Q49 carries the glutamine amide modification. Propeptides lie at residues 50–116 (GRRF…LLNW) and 74–116 (PNSQ…LLNW). Positions 53–73 (FLSDQSRRKDLSDRPPLERRS) are enriched in basic and acidic residues. Residues 53–80 (FLSDQSRRKDLSDRPPLERRSPNSQQLT) are disordered.

The protein belongs to the spexin family.

The protein localises to the secreted. It is found in the extracellular space. It localises to the cytoplasmic vesicle. The protein resides in the secretory vesicle. Its function is as follows. Plays a role as a central modulator of cardiovascular and renal function and nociception. Also plays a role in energy metabolism and storage. Inhibits adrenocortical cell proliferation with minor stimulation on corticosteroid release. Functionally, acts as a ligand for galanin receptors GALR2 and GALR3. Intracerebroventricular administration of the peptide induces an increase in arterial blood pressure, a decrease in both heart rate and renal excretion and delayed natriuresis. Intraventricular administration of the peptide induces antinociceptive activity. Also induces contraction of muscarinic-like stomach smooth muscles. Intraperitoneal administration of the peptide induces a reduction in food consumption and body weight. Inhibits long chain fatty acid uptake into adipocytes. Intracerebroventricular administration of the peptide induces a decrease in heart rate, but no change in arterial pressure, and an increase in urine flow rate. Intraventricular administration of the peptide induces antinociceptive activity. The polypeptide is Spexin (SPX) (Bos taurus (Bovine)).